Consider the following 1090-residue polypeptide: Telomerase reverse transcriptase (1090 aa).

The tract at residues 184 to 301 (GFLLRPPSRK…PLEGGPSWRS (118 aa)) is disordered. A compositionally biased stretch (basic residues) spans 190–204 (PSRKHKSFQVGKKTR). Composition is skewed to basic and acidic residues over residues 218–232 (EESRKRRRVESEVST) and 252–262 (HHEERRQHEAV). Pro residues predominate over residues 281 to 294 (KPPPETSAAPPPLE). The TFLY; involved in RNA binding motif lies at 316-321 (TLGFLY). 2 interaction with RNA template regions span residues 371-376 (LPLRYF) and 477-503 (WKIKVMDCDWLKLRRTAGRFPPSELAY). The region spanning 569–893 (SPAQVASLPK…CLFPWCGLLL (325 aa)) is the Reverse transcriptase domain. Residues Asp-666, Asp-826, and Asp-827 each coordinate Mg(2+).

It belongs to the reverse transcriptase family. Telomerase subfamily. As to quaternary structure, catalytic subunit of the telomerase holoenzyme complex composed minimally of TERT and the telomerase RNA template component (TERC). In terms of tissue distribution, expressed at highest levels in gonads and brain, and at lower levels in heart, spleen, kidney, gill, muscle and skin. Detected in embryonic stem cell lines before and after differentiation. Isoform F is expressed in gonads, with higher levels in testis relative to ovary, but is not detected in other tissues. Isoform B is expressed predominantly in testis. Isoform C is up-regulated in embryonic stem cell lines after differentiation.

Its subcellular location is the nucleus. It localises to the chromosome. It is found in the telomere. The enzyme catalyses DNA(n) + a 2'-deoxyribonucleoside 5'-triphosphate = DNA(n+1) + diphosphate. Telomerase is a ribonucleoprotein enzyme essential for the replication of chromosome termini in most eukaryotes. It elongates telomeres. It is a reverse transcriptase that adds simple sequence repeats to chromosome ends by copying a template sequence within the RNA component of the enzyme. The chain is Telomerase reverse transcriptase from Oryzias latipes (Japanese rice fish).